Here is a 118-residue protein sequence, read N- to C-terminus: Beta-elicitin cryptogein (118 aa).

Positions 1–20 (MNFTALLAAVAAALVGSANA) are cleaved as a signal peptide. Disulfide bonds link C23-C91, C47-C76, and C71-C115.

Belongs to the elicitin family.

It localises to the secreted. In terms of biological role, induces local and distal defense responses (incompatible hypersensitive reaction) in plants from the solanaceae and cruciferae families. Elicits leaf necrosis and causes the accumulation of pathogenesis-related proteins. Might interact with the lipidic molecules of the plasma membrane. This Phytophthora cryptogea protein is Beta-elicitin cryptogein.